The chain runs to 230 residues: Probable methylthioribulose-1-phosphate dehydratase (230 aa).

Substrate is bound at residue Cys87. 2 residues coordinate Zn(2+): His105 and His107. The active-site Proton donor/acceptor is Glu129. His185 is a binding site for Zn(2+).

It belongs to the aldolase class II family. MtnB subfamily. It depends on Zn(2+) as a cofactor.

The protein resides in the cytoplasm. It catalyses the reaction 5-(methylsulfanyl)-D-ribulose 1-phosphate = 5-methylsulfanyl-2,3-dioxopentyl phosphate + H2O. It participates in amino-acid biosynthesis; L-methionine biosynthesis via salvage pathway; L-methionine from S-methyl-5-thio-alpha-D-ribose 1-phosphate: step 2/6. Catalyzes the dehydration of methylthioribulose-1-phosphate (MTRu-1-P) into 2,3-diketo-5-methylthiopentyl-1-phosphate (DK-MTP-1-P). The polypeptide is Probable methylthioribulose-1-phosphate dehydratase (Drosophila pseudoobscura pseudoobscura (Fruit fly)).